The sequence spans 127 residues: Aspartate 1-decarboxylase (127 aa).

Catalysis depends on S25, which acts as the Schiff-base intermediate with substrate; via pyruvic acid. At S25 the chain carries Pyruvic acid (Ser). Substrate is bound at residue T57. Y58 serves as the catalytic Proton donor. G73–A75 is a binding site for substrate.

Belongs to the PanD family. In terms of assembly, heterooctamer of four alpha and four beta subunits. Pyruvate serves as cofactor. In terms of processing, is synthesized initially as an inactive proenzyme, which is activated by self-cleavage at a specific serine bond to produce a beta-subunit with a hydroxyl group at its C-terminus and an alpha-subunit with a pyruvoyl group at its N-terminus.

It is found in the cytoplasm. It carries out the reaction L-aspartate + H(+) = beta-alanine + CO2. It participates in cofactor biosynthesis; (R)-pantothenate biosynthesis; beta-alanine from L-aspartate: step 1/1. In terms of biological role, catalyzes the pyruvoyl-dependent decarboxylation of aspartate to produce beta-alanine. In Clostridium kluyveri (strain NBRC 12016), this protein is Aspartate 1-decarboxylase.